The sequence spans 200 residues: Peptidyl-tRNA hydrolase (200 aa).

Phenylalanine 16 provides a ligand contact to tRNA. Histidine 21 (proton acceptor) is an active-site residue. 3 residues coordinate tRNA: phenylalanine 67, asparagine 69, and asparagine 115.

Belongs to the PTH family. Monomer.

The protein resides in the cytoplasm. It carries out the reaction an N-acyl-L-alpha-aminoacyl-tRNA + H2O = an N-acyl-L-amino acid + a tRNA + H(+). Hydrolyzes ribosome-free peptidyl-tRNAs (with 1 or more amino acids incorporated), which drop off the ribosome during protein synthesis, or as a result of ribosome stalling. In terms of biological role, catalyzes the release of premature peptidyl moieties from peptidyl-tRNA molecules trapped in stalled 50S ribosomal subunits, and thus maintains levels of free tRNAs and 50S ribosomes. The protein is Peptidyl-tRNA hydrolase of Prochlorococcus marinus (strain MIT 9215).